Here is a 346-residue protein sequence, read N- to C-terminus: Quinolinate synthase (346 aa).

Iminosuccinate-binding residues include histidine 47 and serine 68. Cysteine 113 is a binding site for [4Fe-4S] cluster. Iminosuccinate is bound by residues 139–141 (YAN) and serine 156. Position 200 (cysteine 200) interacts with [4Fe-4S] cluster. Residues 226-228 (HPE) and threonine 243 contribute to the iminosuccinate site. Cysteine 297 is a binding site for [4Fe-4S] cluster.

Belongs to the quinolinate synthase family. Type 1 subfamily. The cofactor is [4Fe-4S] cluster.

The protein resides in the cytoplasm. It catalyses the reaction iminosuccinate + dihydroxyacetone phosphate = quinolinate + phosphate + 2 H2O + H(+). It participates in cofactor biosynthesis; NAD(+) biosynthesis; quinolinate from iminoaspartate: step 1/1. Its function is as follows. Catalyzes the condensation of iminoaspartate with dihydroxyacetone phosphate to form quinolinate. The protein is Quinolinate synthase of Photorhabdus laumondii subsp. laumondii (strain DSM 15139 / CIP 105565 / TT01) (Photorhabdus luminescens subsp. laumondii).